Here is a 616-residue protein sequence, read N- to C-terminus: Sulfite reductase [NADPH] hemoprotein beta-component (616 aa).

A compositionally biased stretch (basic and acidic residues) spans 1 to 10; it reads MDDHSPRDAA. A disordered region spans residues 1 to 35; the sequence is MDDHSPRDAAETPAPGPAATPAKRVYETPPTSRPI. Over residues 11–22 the composition is skewed to low complexity; the sequence is ETPAPGPAATPA. [4Fe-4S] cluster-binding residues include C470, C476, C515, and C519. C519 serves as a coordination point for siroheme.

The protein belongs to the nitrite and sulfite reductase 4Fe-4S domain family. As to quaternary structure, alpha(8)-beta(8). The alpha component is a flavoprotein, the beta component is a hemoprotein. Requires siroheme as cofactor. [4Fe-4S] cluster serves as cofactor.

The catalysed reaction is hydrogen sulfide + 3 NADP(+) + 3 H2O = sulfite + 3 NADPH + 4 H(+). The protein operates within sulfur metabolism; hydrogen sulfide biosynthesis; hydrogen sulfide from sulfite (NADPH route): step 1/1. In terms of biological role, component of the sulfite reductase complex that catalyzes the 6-electron reduction of sulfite to sulfide. This is one of several activities required for the biosynthesis of L-cysteine from sulfate. The polypeptide is Sulfite reductase [NADPH] hemoprotein beta-component (Methylobacterium radiotolerans (strain ATCC 27329 / DSM 1819 / JCM 2831 / NBRC 15690 / NCIMB 10815 / 0-1)).